Reading from the N-terminus, the 205-residue chain is Small ribosomal subunit protein mS26 (205 aa).

A mitochondrion-targeting transit peptide spans 1–27; the sequence is MLRALSRLGAGTPCRPRAPLVLPARGR.

The protein belongs to the mitochondrion-specific ribosomal protein mS26 family. As to quaternary structure, component of the mitochondrial small ribosomal subunit (mt-SSU). Mature mammalian 55S mitochondrial ribosomes consist of a small (28S) and a large (39S) subunit. The 28S small subunit contains a 12S ribosomal RNA (12S mt-rRNA) and 30 different proteins. The 39S large subunit contains a 16S rRNA (16S mt-rRNA), a copy of mitochondrial valine transfer RNA (mt-tRNA(Val)), which plays an integral structural role, and 52 different proteins.

The protein localises to the mitochondrion. In Homo sapiens (Human), this protein is Small ribosomal subunit protein mS26 (MRPS26).